Here is a 720-residue protein sequence, read N- to C-terminus: Polyribonucleotide nucleotidyltransferase (720 aa).

The Mg(2+) site is built by aspartate 487 and aspartate 493. Positions 554–613 (PRIETFKIPTDKIREVIGTGGKVIREIVEKTGAKVNIEDDGTVKVASSDGEAMKAAIKWI) constitute a KH domain. An S1 motif domain is found at 623-691 (GQIYDGTVVK…DRGKTRLSMK (69 aa)). Residues 692 to 720 (AVDQTTGEDLEAKQKAEGGAEAPREAAGE) form a disordered region. The span at 701–720 (LEAKQKAEGGAEAPREAAGE) shows a compositional bias: basic and acidic residues.

This sequence belongs to the polyribonucleotide nucleotidyltransferase family. The cofactor is Mg(2+).

The protein localises to the cytoplasm. It carries out the reaction RNA(n+1) + phosphate = RNA(n) + a ribonucleoside 5'-diphosphate. Functionally, involved in mRNA degradation. Catalyzes the phosphorolysis of single-stranded polyribonucleotides processively in the 3'- to 5'-direction. In Bradyrhizobium sp. (strain BTAi1 / ATCC BAA-1182), this protein is Polyribonucleotide nucleotidyltransferase.